We begin with the raw amino-acid sequence, 239 residues long: RNA chaperone ProQ (239 aa).

The tract at residues 107–177 is disordered; it reads KARVQAQRAE…RKPVAKPVQA (71 aa). A compositionally biased stretch (basic and acidic residues) spans 115–137; the sequence is AEQRAKKREAENVAAGEKNERPT.

It belongs to the ProQ family.

It is found in the cytoplasm. In terms of biological role, RNA chaperone with significant RNA binding, RNA strand exchange and RNA duplexing activities. May regulate ProP activity through an RNA-based, post-transcriptional mechanism. In Photorhabdus laumondii subsp. laumondii (strain DSM 15139 / CIP 105565 / TT01) (Photorhabdus luminescens subsp. laumondii), this protein is RNA chaperone ProQ.